The sequence spans 296 residues: MTADAYLIDKARVRRSFDRAAGTYDAAALLQREVRERMLERLDLVKLAPQAVLDAGCGTGHASAALSARYRQSQVISLDIAMGMLKKTMAARSLVQRLFGFDRRHAVCADIERLPLAAASIDLVWSNMAIQWCNDLDQAFGEIQRVLKPEGLLMFSTLGPDTLKELRAATRQDNTHVTVSRFIDMHDIGDALVRAGFNAPVLDVEYFELTYDDVMGVMRDLKAIGAHNAAEGRHRGLQGRGFLQQVQARYESFRRDGKLPATYEVIYGHAWKPQARVALPDGLSPVQFRPRASSST.

The protein belongs to the methyltransferase superfamily.

It carries out the reaction malonyl-[ACP] + S-adenosyl-L-methionine = malonyl-[ACP] methyl ester + S-adenosyl-L-homocysteine. It functions in the pathway cofactor biosynthesis; biotin biosynthesis. Converts the free carboxyl group of a malonyl-thioester to its methyl ester by transfer of a methyl group from S-adenosyl-L-methionine (SAM). It allows to synthesize pimeloyl-ACP via the fatty acid synthetic pathway. The sequence is that of Malonyl-[acyl-carrier protein] O-methyltransferase from Methylovorus sp. (strain MP688).